A 153-amino-acid chain; its full sequence is Bacteriohemerythrin (153 aa).

Residues His-21, His-57, Glu-61, His-76, His-80, His-115, and Asp-120 each contribute to the Fe cation site.

The protein belongs to the hemerythrin family. In terms of assembly, monomer.

Functionally, oxygen-binding protein. May be involved in a storage mechanism or for delivery to oxygen-requiring enzymes. The oxygen-binding site contains two iron atoms. The polypeptide is Bacteriohemerythrin (Pseudomonas aeruginosa (strain UCBPP-PA14)).